Reading from the N-terminus, the 113-residue chain is Flagellar hook-basal body complex protein FliE (113 aa).

Belongs to the FliE family.

It localises to the bacterial flagellum basal body. The polypeptide is Flagellar hook-basal body complex protein FliE (Rhizobium etli (strain CIAT 652)).